Here is a 334-residue protein sequence, read N- to C-terminus: Phosphate acyltransferase (334 aa).

The protein belongs to the PlsX family. Homodimer. Probably interacts with PlsY.

The protein localises to the cytoplasm. The catalysed reaction is a fatty acyl-[ACP] + phosphate = an acyl phosphate + holo-[ACP]. It functions in the pathway lipid metabolism; phospholipid metabolism. Functionally, catalyzes the reversible formation of acyl-phosphate (acyl-PO(4)) from acyl-[acyl-carrier-protein] (acyl-ACP). This enzyme utilizes acyl-ACP as fatty acyl donor, but not acyl-CoA. The sequence is that of Phosphate acyltransferase from Halothermothrix orenii (strain H 168 / OCM 544 / DSM 9562).